The sequence spans 512 residues: Gamma-aminobutyric acid receptor subunit beta-2 (512 aa).

The N-terminal stretch at 1-25 (MWRVRKRGYFGIWSFPLIIAAVCAQ) is a signal peptide. Residues 26–241 (SVNDPSNMSL…LSLSFKLKRN (216 aa)) are Extracellular-facing. Residues N32 and N104 are each glycosylated (N-linked (GlcNAc...) asparagine). Position 121 (Y121) interacts with histamine. C160 and C174 are disulfide-bonded. N-linked (GlcNAc...) asparagine glycosylation occurs at N173. Histamine contacts are provided by residues 180–181 (SY) and T226. 4-aminobutanoate-binding residues include Y181 and T226. A helical transmembrane segment spans residues 242–262 (IGYFILQTYMPSILITILSWV). Residues 263–272 (SFWINYDASA) are Cytoplasmic-facing. Residues 273 to 292 (ARVALGITTVLTMTTINTHL) form a helical membrane-spanning segment. The Extracellular portion of the chain corresponds to 293 to 310 (RETLPKIPYVKAIDMYLM). The helical transmembrane segment at 311–331 (GCFVFVFMALLEYALVNYIFF) threads the bilayer. Residues 332-490 (GRGPQRQKKA…LTDVNAIDRW (159 aa)) lie on the Cytoplasmic side of the membrane. Y441 carries the phosphotyrosine modification. The helical transmembrane segment at 491–511 (SRIFFPVVFSFFNIVYWLYYV) threads the bilayer. Position 512 (N512) is a topological domain, extracellular.

The protein belongs to the ligand-gated ion channel (TC 1.A.9) family. Gamma-aminobutyric acid receptor (TC 1.A.9.5) subfamily. GABRB2 sub-subfamily. Heteropentamer, formed by a combination of alpha (GABRA1-6), beta (GABRB1-3), gamma (GABRG1-3), delta (GABRD), epsilon (GABRE), rho (GABRR1-3), pi (GABRP) and theta (GABRQ) chains, each subunit exhibiting distinct physiological and pharmacological properties. Interacts with UBQLN1. May interact with KIF21B. Identified in a complex of 720 kDa composed of LHFPL4, NLGN2, GABRA1, GABRB2, GABRG2 and GABRB3. As to expression, isoform 1 and isoform 2 show reduced expression in schizophrenic brain. Isoform 3 shows increased expression in schizophrenic and bipolar disorder brains while isoform 4 shows reduced expression.

Its subcellular location is the postsynaptic cell membrane. The protein resides in the cell membrane. It localises to the cytoplasmic vesicle membrane. The catalysed reaction is chloride(in) = chloride(out). Its activity is regulated as follows. Allosterically activated by benzodiazepines. Allosterically activated by the anesthetic etomidate. Inhibited by the antagonist bicuculline. Potentiated by histamine. Its function is as follows. Beta subunit of the heteropentameric ligand-gated chloride channel gated by gamma-aminobutyric acid (GABA), a major inhibitory neurotransmitter in the brain. GABA-gated chloride channels, also named GABA(A) receptors (GABAAR), consist of five subunits arranged around a central pore and contain GABA active binding site(s) located at the alpha and beta subunit interface(s). When activated by GABA, GABAARs selectively allow the flow of chloride anions across the cell membrane down their electrochemical gradient. Chloride influx into the postsynaptic neuron following GABAAR opening decreases the neuron ability to generate a new action potential, thereby reducing nerve transmission. GABAARs containing alpha-1 and beta-2 or -3 subunits exhibit synaptogenic activity; the gamma-2 subunit being necessary but not sufficient to induce rapid synaptic contacts formation. Extrasynaptic beta-2 receptors contribute to the tonic GABAergic inhibition. Beta-containing GABAARs can simultaneously bind GABA and histamine where histamine binds at the interface of two neighboring beta subunits, which may be involved in the regulation of sleep and wakefulness. The polypeptide is Gamma-aminobutyric acid receptor subunit beta-2 (Homo sapiens (Human)).